Consider the following 135-residue polypeptide: Interleukin-4 (135 aa).

The N-terminal stretch at 1 to 24 is a signal peptide; that stretch reads MGLTYQLIPVLVCLLVCTSHFAHG. Disulfide bonds link Cys27–Cys135, Cys48–Cys85, and Cys70–Cys105. A glycan (N-linked (GlcNAc...) asparagine) is linked at Asn62.

Belongs to the IL-4/IL-13 family.

The protein resides in the secreted. Participates in at least several B-cell activation processes as well as of other cell types. It is a costimulator of DNA-synthesis. It induces the expression of class II MHC molecules on resting B-cells. It enhances both secretion and cell surface expression of IgE and IgG1. It also regulates the expression of the low affinity Fc receptor for IgE (CD23) on both lymphocytes and monocytes. Positively regulates IL31RA expression in macrophages. Stimulates autophagy in dendritic cells by interfering with mTORC1 signaling and through the induction of RUFY4. This chain is Interleukin-4 (IL4), found in Boselaphus tragocamelus (Nilgai).